The chain runs to 1728 residues: Nebulin-related-anchoring protein (1728 aa).

In terms of domain architecture, LIM zinc-binding spans 4–64 (QACSRCGYGV…HAHNPKNNTF (61 aa)). 41 Nebulin repeats span residues 173–200 (TPAYQRAKAANQLASQVQYKRGHDERVS), 201–235 (TFTPVADTPELLRAKAGGQLQNDVRYTEDGGQQRG), 244–271 (TPAYQIAKRATELASDVRYHQQYHREMK), 313–340 (TPAYQNAKKANELVSDIKYRQDFHKMKG), 345–379 (HSLAAQDNLVLKRAQSVSKLVSEVEYKKGLENSKG), 386–414 (ETPQFRNVSKISKFTSDNKYKENYQTQLR), 416–450 (HYDGVGMDRRMLHALKVGSLASNVAYKADYKHDVV), 484–518 (KFSSVTNTPQIVQAKINAQQLSHVNYRADYERNKL), 519–553 (NYTLPQDAPQLLKAKANAELFSEVKYKEGWQKTKG), 555–589 (GFEMKLDAMSLLAAKASGELASSVKYKEEYEKMKG), 599–623 (LLHSLQVAKMSSEVEYKKGFEESKT), 624–658 (HFNLPMDMVNLRHAKKAQALASDLDYRKKLHDYTV), 659–689 (LPEDMKTQWAKKAYGLQSELQYKADLAWMRG), 699–721 (NLEQAKKAGQLISEKNYRQRVDE), 723–757 (KFTSVADSSQMEHAKKSQGLQNAVAYKAGNEQSVH), 758–792 (QYTISKDEPLFLRARANAAQLSETLYKSSWEKQKA), 794–828 (GFELRLDSLAFLTAKAKRDLASEVKYKEDYERSRG), 841–866 (QMSHSLQMSKLQSDLEYKKGFEDTRS), 867–893 (QCHISLDMVHLVHARQAQHLATDVGYR), 898–932 (CFTALPTDMKVEWAKKAYGLQSDNQYRADMKWMKG), 943–960 (VEQAKKAGELISEKKYRQ), 966–1000 (KFTSIKDTPEMVQARISYTQAVDRLYREQGENVKH), 1001–1035 (HYTQTADLPEVLLAKLNAMNISETRYKESWSRLRD), 1037–1071 (GYKLRLDALPFQAAKASSEVISDYKYKEAFERMKG), 1075–1109 (GSRSLEDDLSLAHSVHATSLQSDVNYKKGFEHAKA), 1110–1136 (HFHLPLDMVTLVHAKKAQTLASDQDYR), 1141–1175 (QHTVLAEDLRLSCAKKAHKLQSENLYRSDLNFMRG), 1180–1203 (VPGTLEIEGRKKASELISESKYRQ), 1209–1243 (KYTAVTDTPNLLHAKYSNQITNERLYKAAGEDARH), 1244–1278 (QYTMTLGLPEFIRAKTNAANLSEAKYKEAWHNLRA), 1280–1314 (GYKLTIDALPFQAARASGDIASDFLYRHEFVKERG), 1318–1352 (GVRNVSDDPRLLHCLRMGQLQSENQYRKEAASSQA), 1353–1379 (QCHLPMDMMYLVHARKAQALASDHDYR), 1384–1418 (EFTALPEDLKMAWAKKAHALQSEFRYKADLMGMKG), 1425–1446 (QSPQIESAKKAGDLISETKYRK), 1452–1478 (KFTTVVDSPDLIHAKESYMHCNERLYR), 1487–1521 (RYTPIPDHPDFTRARMNAMHLSDKVYRNAWEQSRA), 1523–1557 (GYDFRLDAIPFQTARVSRDIASDFRYKEAFLRDRG), 1561–1595 (GYRSISDDPRTTHFLRVGRLQSDNEYRKAFAKGRS), 1596–1630 (QFHSRADQPGFLQAKRSQQLASDVLYRQPLPQHTS), and 1637–1661 (LKHARKAHQLQSDVKYKSDLNLTRG). Threonine 203 is subject to Phosphothreonine. Serine 1078 carries the post-translational modification Phosphoserine.

In terms of assembly, interacts with actin, alpha-actinin, KLHL41, TLN1 and VCL. Interacts with CSRP3. Expressed in cardiac and skeletal muscle. Not detected in kidney, spleen, liver, brain, lung, stomach or uterus.

May be involved in anchoring the terminal actin filaments in the myofibril to the membrane and in transmitting tension from the myofibrils to the extracellular matrix. The chain is Nebulin-related-anchoring protein from Mus musculus (Mouse).